The chain runs to 399 residues: Probable aspartate/prephenate aminotransferase (399 aa).

Positions 39, 125, and 175 each coordinate L-aspartate. Lys239 bears the N6-(pyridoxal phosphate)lysine mark. An L-aspartate-binding site is contributed by Arg375.

It belongs to the class-I pyridoxal-phosphate-dependent aminotransferase family. As to quaternary structure, homodimer. It depends on pyridoxal 5'-phosphate as a cofactor.

Its subcellular location is the cytoplasm. The enzyme catalyses L-aspartate + 2-oxoglutarate = oxaloacetate + L-glutamate. The catalysed reaction is L-arogenate + 2-oxoglutarate = prephenate + L-glutamate. Functionally, catalyzes the reversible conversion of aspartate and 2-oxoglutarate to glutamate and oxaloacetate. Can also transaminate prephenate in the presence of glutamate. This is Probable aspartate/prephenate aminotransferase (aatA) from Rickettsia bellii (strain RML369-C).